Reading from the N-terminus, the 510-residue chain is Probable sphingolipid transporter spinster homolog 3 (510 aa).

A helical membrane pass occupies residues 44 to 64 (SSLSPVWLLVIFCIINLLNYM). 2 N-linked (GlcNAc...) asparagine glycosylation sites follow: Asn75 and Asn98. Transmembrane regions (helical) follow at residues 106–126 (VLSSSFMVGLLIASPIFASLA), 136–156 (VWTIAVLGCGSSFAFWFIVLC), 158–178 (MFVGVGEASFISLAAPFIDDN), 185–205 (AAWLGLFYMCIPSGVALGYVY), 219–239 (FWGEAVLMAPFAVLGFLMKPL), 298–318 (VFVVNVLGYVSYNFVIGAYSY), 336–356 (IFGAVTIICGIVGTLSGGFIL), 369–387 (LLSGATFLGAVFCFTAFTL), 392–414 (GFIALFALGELLVFATQAPVNYV), 430–450 (ISTVAIHIFGDVPSSPLVGIV), and 462–482 (LILTSILFLAAAIWFIGKINL).

It belongs to the major facilitator superfamily. Spinster (TC 2.A.1.49) family.

It is found in the mitochondrion inner membrane. In terms of biological role, probable sphingolipid transporter. The sequence is that of Probable sphingolipid transporter spinster homolog 3 from Arabidopsis thaliana (Mouse-ear cress).